Here is a 274-residue protein sequence, read N- to C-terminus: Glucosamine-6-phosphate deaminase (274 aa).

Asp-71 serves as the catalytic Proton acceptor; for enolization step. Asp-140 (for ring-opening step) is an active-site residue. The active-site Proton acceptor; for ring-opening step is His-142. The active-site For ring-opening step is Glu-147.

Belongs to the glucosamine/galactosamine-6-phosphate isomerase family. NagB subfamily.

It carries out the reaction alpha-D-glucosamine 6-phosphate + H2O = beta-D-fructose 6-phosphate + NH4(+). Its pathway is amino-sugar metabolism; N-acetylneuraminate degradation; D-fructose 6-phosphate from N-acetylneuraminate: step 5/5. Catalyzes the reversible isomerization-deamination of glucosamine 6-phosphate (GlcN6P) to form fructose 6-phosphate (Fru6P) and ammonium ion. This is Glucosamine-6-phosphate deaminase from Fusobacterium nucleatum subsp. nucleatum (strain ATCC 25586 / DSM 15643 / BCRC 10681 / CIP 101130 / JCM 8532 / KCTC 2640 / LMG 13131 / VPI 4355).